The chain runs to 131 residues: MAPPKAEKKPASKAPAEKKPAAKKTASATDSKKRTKTRKETYSSYIYKVLKQTHPDTGISQKAMSIMNSFVNDIFERIASEASKLAAYNKKSTISAREIQTAVRLILPGELAKHAVSEGTRAVTKYSSASN.

The span at 1 to 20 (MAPPKAEKKPASKAPAEKKP) shows a compositional bias: basic and acidic residues. The interval 1-39 (MAPPKAEKKPASKAPAEKKPAAKKTASATDSKKRTKTRK) is disordered. 2 positions are modified to N6-acetyllysine; alternate: lysine 8 and lysine 9. Residues lysine 8 and lysine 9 each participate in a glycyl lysine isopeptide (Lys-Gly) (interchain with G-Cter in SUMO); alternate cross-link. Serine 12 is subject to Phosphoserine. Lysine 13 is modified (N6-acetyllysine). Residue lysine 18 is modified to N6-acetyllysine; alternate. A Glycyl lysine isopeptide (Lys-Gly) (interchain with G-Cter in SUMO); alternate cross-link involves residue lysine 18. Residue lysine 19 forms a Glycyl lysine isopeptide (Lys-Gly) (interchain with G-Cter in SUMO) linkage. Lysine 125 is covalently cross-linked (Glycyl lysine isopeptide (Lys-Gly) (interchain with G-Cter in ubiquitin)).

This sequence belongs to the histone H2B family. The nucleosome is a histone octamer containing two molecules each of H2A, H2B, H3 and H4 assembled in one H3-H4 heterotetramer and two H2A-H2B heterodimers. The octamer wraps approximately 147 bp of DNA. In terms of processing, monoubiquitinated to form H2BK123ub1. H2BK123ub1 gives a specific tag for epigenetic transcriptional activation and is also prerequisite for H3K4me and H3K79me formation. H2BK123ub1 also modulates the formation of double-strand breaks during meiosis and is a prerequisite for DNA-damage checkpoint activation. Phosphorylated by STE20 to form H2BS10ph during progression through meiotic prophase. May be correlated with chromosome condensation. Post-translationally, acetylated by GCN5 to form H2BK11ac and H2BK16ac. H2BK16ac can also be formed by ESA1. Acetylation of N-terminal lysines and particularly formation of H2BK11acK16ac has a positive effect on transcription. In terms of processing, sumoylation to form H2BK6su or H2BK7su, and probably also H2BK16su or H2BK17su, occurs preferentially near the telomeres and represses gene transcription.

The protein localises to the nucleus. The protein resides in the chromosome. Its function is as follows. Core component of nucleosome. Nucleosomes wrap and compact DNA into chromatin, limiting DNA accessibility to the cellular machineries which require DNA as a template. Histones thereby play a central role in transcription regulation, DNA repair, DNA replication and chromosomal stability. DNA accessibility is regulated via a complex set of post-translational modifications of histones, also called histone code, and nucleosome remodeling. The sequence is that of Histone H2B.1 (HTB1) from Scheffersomyces stipitis (strain ATCC 58785 / CBS 6054 / NBRC 10063 / NRRL Y-11545) (Yeast).